We begin with the raw amino-acid sequence, 256 residues long: Enolase-phosphatase E1 (256 aa).

Mg(2+) is bound by residues Asp14 and Glu16. Substrate-binding positions include 142-143 (SS) and Lys176. Asp201 provides a ligand contact to Mg(2+).

Belongs to the HAD-like hydrolase superfamily. MasA/MtnC family. Monomer. The cofactor is Mg(2+).

Its subcellular location is the cytoplasm. It localises to the nucleus. It carries out the reaction 5-methylsulfanyl-2,3-dioxopentyl phosphate + H2O = 1,2-dihydroxy-5-(methylsulfanyl)pent-1-en-3-one + phosphate. It participates in amino-acid biosynthesis; L-methionine biosynthesis via salvage pathway; L-methionine from S-methyl-5-thio-alpha-D-ribose 1-phosphate: step 3/6. The protein operates within amino-acid biosynthesis; L-methionine biosynthesis via salvage pathway; L-methionine from S-methyl-5-thio-alpha-D-ribose 1-phosphate: step 4/6. Functionally, bifunctional enzyme that catalyzes the enolization of 2,3-diketo-5-methylthiopentyl-1-phosphate (DK-MTP-1-P) into the intermediate 2-hydroxy-3-keto-5-methylthiopentenyl-1-phosphate (HK-MTPenyl-1-P), which is then dephosphorylated to form the acireductone 1,2-dihydroxy-3-keto-5-methylthiopentene (DHK-MTPene). This Drosophila melanogaster (Fruit fly) protein is Enolase-phosphatase E1.